The following is a 229-amino-acid chain: MAAFGINSKIFQSMEMAILFLLAISIDRYCFAADEDMLQDVCVADLHSKVKVNGFPCKTNFTAADFSSLAISKPGATNNKFGSVVTTANVEQVPGLNTLGVSLARIDYAPGGINPPHTHPRASEMVFVMEGELDVGFITTANVLVSKKIIKGEVFVFPRGLVHFQKNNGEVPAAVISAFNSQLPGTQSIPITLFGASPPVPDDVLAQTFQINTEDVQQIKSKFAPVKKF.

Positions 1 to 32 are cleaved as a signal peptide; sequence MAAFGINSKIFQSMEMAILFLLAISIDRYCFA. A disulfide bond links C42 and C57. Residue N60 is glycosylated (N-linked (GlcNAc...) asparagine). Residues 69-217 enclose the Cupin type-1 domain; that stretch reads LAISKPGATN…TFQINTEDVQ (149 aa). Residues H117, H119, E124, and H163 each contribute to the Mn(2+) site.

Monomer. In the absence of manganese, it forms tetrameric and pentameric forms which show superoxide dismutase activity. The cofactor is Mn(2+). As to expression, nectary tissues and to a lower level ovary. Not detected in petals, stems, leaves, roots or other floral tissues.

The protein localises to the secreted. It localises to the extracellular space. Its subcellular location is the apoplast. It catalyses the reaction 2 superoxide + 2 H(+) = H2O2 + O2. In terms of biological role, may interact with bacterial adhesins thereby protecting the reproductive tissues from microbial attack. Has no oxalate oxidase activity. In Nicotiana langsdorffii x Nicotiana sanderae (Ornamental tobacco), this protein is Nectarin-1 (NECI).